The primary structure comprises 388 residues: Cytochrome b (388 aa).

A run of 4 helical transmembrane segments spans residues 32–52 (FGSL…TLAM), 76–98 (WLIR…LHVG), 113–133 (TWTI…LGYV), and 179–199 (FFAL…MHLI). Residues His82 and His96 each coordinate heme b. Heme b contacts are provided by His183 and His197. His202 serves as a coordination point for a ubiquinone. 4 consecutive transmembrane segments (helical) span residues 226–246 (FIFK…IFIF), 290–310 (LLGV…PITD), 322–342 (LSKI…QLGA), and 349–369 (FIEF…IIVP).

It belongs to the cytochrome b family. As to quaternary structure, fungal cytochrome b-c1 complex contains 10 subunits; 3 respiratory subunits, 2 core proteins and 5 low-molecular weight proteins. Cytochrome b-c1 complex is a homodimer. The cofactor is heme b.

The protein resides in the mitochondrion inner membrane. Functionally, component of the ubiquinol-cytochrome c reductase complex (complex III or cytochrome b-c1 complex) that is part of the mitochondrial respiratory chain. The b-c1 complex mediates electron transfer from ubiquinol to cytochrome c. Contributes to the generation of a proton gradient across the mitochondrial membrane that is then used for ATP synthesis. This Zymoseptoria tritici (Speckled leaf blotch fungus) protein is Cytochrome b (cob).